The chain runs to 268 residues: Tryptophan synthase alpha chain (268 aa).

Residues Glu49 and Asp60 each act as proton acceptor in the active site.

It belongs to the TrpA family. Tetramer of two alpha and two beta chains.

The catalysed reaction is (1S,2R)-1-C-(indol-3-yl)glycerol 3-phosphate + L-serine = D-glyceraldehyde 3-phosphate + L-tryptophan + H2O. It participates in amino-acid biosynthesis; L-tryptophan biosynthesis; L-tryptophan from chorismate: step 5/5. The alpha subunit is responsible for the aldol cleavage of indoleglycerol phosphate to indole and glyceraldehyde 3-phosphate. The sequence is that of Tryptophan synthase alpha chain from Escherichia coli O17:K52:H18 (strain UMN026 / ExPEC).